A 135-amino-acid chain; its full sequence is uncharacterized protein (135 aa).

The tract at residues 1-75 (MAAATETGQA…PPPRPPQRRC (75 aa)) is disordered.

This is an uncharacterized protein from Homo sapiens (Human).